Consider the following 205-residue polypeptide: Probable GTP-binding protein EngB (205 aa).

One can recognise an EngB-type G domain in the interval 29 to 203 (QGAEIAFIGR…KAVLSQWFRS (175 aa)). Residues 37 to 44 (GRSNAGKS), 64 to 68 (GRTQM), 82 to 85 (DLPG), 149 to 152 (TKSD), and 182 to 184 (FSS) each bind GTP. Mg(2+)-binding residues include serine 44 and threonine 66.

Belongs to the TRAFAC class TrmE-Era-EngA-EngB-Septin-like GTPase superfamily. EngB GTPase family. The cofactor is Mg(2+).

Necessary for normal cell division and for the maintenance of normal septation. This Coxiella burnetii (strain CbuG_Q212) (Coxiella burnetii (strain Q212)) protein is Probable GTP-binding protein EngB.